Here is a 182-residue protein sequence, read N- to C-terminus: Probable RNA 2'-phosphotransferase (182 aa).

It belongs to the KptA/TPT1 family.

Removes the 2'-phosphate from RNA via an intermediate in which the phosphate is ADP-ribosylated by NAD followed by a presumed transesterification to release the RNA and generate ADP-ribose 1''-2''-cyclic phosphate (APPR&gt;P). May function as an ADP-ribosylase. This is Probable RNA 2'-phosphotransferase from Trichormus variabilis (strain ATCC 29413 / PCC 7937) (Anabaena variabilis).